The following is a 137-amino-acid chain: Small ribosomal subunit protein uS12 (137 aa).

The interval 1–28 (MPTINQLVRKPRKSKAKKSDSPALNKGF) is disordered. The residue at position 102 (D102) is a 3-methylthioaspartic acid.

This sequence belongs to the universal ribosomal protein uS12 family. As to quaternary structure, part of the 30S ribosomal subunit. Contacts proteins S8 and S17. May interact with IF1 in the 30S initiation complex.

Its function is as follows. With S4 and S5 plays an important role in translational accuracy. In terms of biological role, interacts with and stabilizes bases of the 16S rRNA that are involved in tRNA selection in the A site and with the mRNA backbone. Located at the interface of the 30S and 50S subunits, it traverses the body of the 30S subunit contacting proteins on the other side and probably holding the rRNA structure together. The combined cluster of proteins S8, S12 and S17 appears to hold together the shoulder and platform of the 30S subunit. The sequence is that of Small ribosomal subunit protein uS12 from Staphylococcus carnosus (strain TM300).